The following is a 242-amino-acid chain: Putative prolyl 4-hydroxylase (242 aa).

In terms of domain architecture, Fe2OG dioxygenase spans 128 to 238 (NAEDLQVVRY…KWIANLWFRE (111 aa)).

Belongs to the P4HA family. The cofactor is Fe cation. L-ascorbate is required as a cofactor.

The protein resides in the virion. The catalysed reaction is L-prolyl-[collagen] + 2-oxoglutarate + O2 = trans-4-hydroxy-L-prolyl-[collagen] + succinate + CO2. In terms of biological role, may catalyze the post-translational formation of 4-hydroxyproline in -Xaa-Pro-Gly- sequences in the 6 collagen-like proteins of Mimivirus. This Acanthamoeba polyphaga mimivirus (APMV) protein is Putative prolyl 4-hydroxylase.